We begin with the raw amino-acid sequence, 1594 residues long: RB1-inducible coiled-coil protein 1 (1594 aa).

Phosphoserine occurs at positions 222, 229, and 237. T238 is modified (phosphothreonine). S243, S253, S257, S261, and S266 each carry phosphoserine. A Nuclear localization signal motif is present at residues 566–569; the sequence is KPRK. Phosphoserine occurs at positions 624, 647, 650, 652, 653, 734, 1091, 1222, 1370, and 1484. The tract at residues 638–673 is disordered; sequence EQKASVSQTSPQSASSPRMESTAGITTTTSPRTPPP. A compositionally biased stretch (low complexity) spans 641–654; that stretch reads ASVSQTSPQSASSP. An FFAT motif is present at residues 731 to 737; it reads DFMSAVN. Coiled-coil stretches lie at residues 859 to 1397 and 1438 to 1485; these read LKEK…SSSF and METS…SQSM.

Belongs to the ATG17 family. In terms of assembly, part of a complex consisting of ATG13/KIAA0652, ULK1 and RB1CC1. This complex associates with ATG101. Interacts with PTK2/FAK1 and PTK2B/PYK2. Interacts with GABARAP and GABARAPL1. Interacts with ATG16L1; the interaction is required for ULK1 complex-dependent autophagy. Interacts with RNF111, SKI and SMAD7. Interacts with COP1 in the cytoplasm of proliferating cells in response to UV stimulation. Interacts with TP53. Interacts with C9orf72. Interacts with WDR45B. Interacts with ATG13; this interaction is increased in the absence of TMEM39A. Interacts with WIPI2. Interacts with TAX1BP1. Interacts (via phosphorylated FFAT motif) with MOSPD2, VAPA and VAPB. In terms of processing, phosphorylation at Ser-734 of the FFAT motif activates interaction with MOSPD2, VAPA and VAPB. As to expression, expression levels correlated closely with those of RB1 in cancer cell lines as well as in various normal human tissues. Abundantly expressed in human musculoskeletal and cultured osteosarcoma cells.

It is found in the nucleus. The protein localises to the cytoplasm. The protein resides in the cytosol. Its subcellular location is the preautophagosomal structure. It localises to the lysosome. Functionally, involved in autophagy. Regulates early events but also late events of autophagosome formation through direct interaction with Atg16L1. Required for the formation of the autophagosome-like double-membrane structure that surrounds the Salmonella-containing vacuole (SCV) during S.typhimurium infection and subsequent xenophagy. Involved in repair of DNA damage caused by ionizing radiation, which subsequently improves cell survival by decreasing apoptosis. Inhibits PTK2/FAK1 and PTK2B/PYK2 kinase activity, affecting their downstream signaling pathways. Plays a role as a modulator of TGF-beta-signaling by restricting substrate specificity of RNF111. Functions as a DNA-binding transcription factor. Is a potent regulator of the RB1 pathway through induction of RB1 expression. Plays a crucial role in muscular differentiation. Plays an indispensable role in fetal hematopoiesis and in the regulation of neuronal homeostasis. The sequence is that of RB1-inducible coiled-coil protein 1 from Homo sapiens (Human).